The chain runs to 558 residues: Phosphatidylserine lipase ABHD16A (558 aa).

Transmembrane regions (helical) follow at residues 60–80 (ILALASVFWSISYYSSPFAFF) and 93–113 (VVPFSHYAGTLLLLLAGVACL). Over 114–558 (RGIGRWTNPQ…AQNFQMPWHL (445 aa)) the chain is Cytoplasmic. One can recognise an AB hydrolase-1 domain in the interval 281-407 (LVICCEGNAG…LVTRTVRQHL (127 aa)). Catalysis depends on charge relay system residues S355, D430, and H507.

It belongs to the AB hydrolase superfamily. ABHD16 family.

The protein localises to the membrane. The catalysed reaction is 1-heptadecanoyl-2-(5Z,8Z,11Z,14Z-eicosatetraenoyl)-sn-glycero-3-phosphoserine + H2O = 1-heptadecanoyl-sn-glycero-3-phosphoserine + (5Z,8Z,11Z,14Z)-eicosatetraenoate + H(+). The enzyme catalyses 1-hexadecanoyl-2-(9Z-octadecenoyl)-sn-glycero-3-phospho-L-serine + H2O = 1-hexadecanoyl-sn-glycero-3-phospho-L-serine + (9Z)-octadecenoate + H(+). It catalyses the reaction 1-octadecanoyl-2-(9Z,12Z-octadecadienoyl)-sn-glycero-3-phosphoserine + H2O = 1-octadecanoyl-sn-glycero-3-phosphoserine + (9Z,12Z)-octadecadienoate + H(+). It carries out the reaction 1-heptadecanoyl-2-(5Z,8Z,11Z,14Z-eicosatetraenoyl)-sn-glycero-3-phosphocholine + H2O = 1-heptadecanoyl-sn-glycero-3-phosphocholine + (5Z,8Z,11Z,14Z)-eicosatetraenoate + H(+). The catalysed reaction is 1-hexadecanoyl-2-(9Z-octadecenoyl)-sn-glycero-3-phosphoglycerol + H2O = 1-hexadecanoyl-sn-glycero-3-phosphoglycerol + (9Z)-octadecenoate + H(+). The enzyme catalyses 1-hexadecanoyl-2-(9Z-octadecenoyl)-sn-glycero-3-phospho-(1D-myo-inositol) + H2O = 1-hexadecanoyl-sn-glycero-3-phospho-(1D-myo-inositol) + (9Z)-octadecenoate + H(+). It catalyses the reaction 1-heptadecanoyl-2-(5Z,8Z,11Z,14Z-eicosatetraenoyl)-sn-glycero-3-phosphoethanolamine + H2O = 1-heptadecanoyl-sn-glycero-3-phosphoethanolamine + (5Z,8Z,11Z,14Z)-eicosatetraenoate + H(+). It carries out the reaction 1-hexadecanoyl-2-(9Z-octadecenoyl)-sn-glycero-3-phospho-(1'-sn-glycerol) + H2O = 1-hexadecanoyl-sn-glycero-3-phospho-(1'-sn-glycerol) + (9Z)-octadecenoate + H(+). The catalysed reaction is Hydrolyzes glycerol monoesters of long-chain fatty acids.. The enzyme catalyses 1-tetradecanoylglycerol + H2O = tetradecanoate + glycerol + H(+). It catalyses the reaction 2-hexadecanoylglycerol + H2O = glycerol + hexadecanoate + H(+). It carries out the reaction 1-(9Z-octadecenoyl)-glycerol + H2O = glycerol + (9Z)-octadecenoate + H(+). The catalysed reaction is 2-(9Z-octadecenoyl)-glycerol + H2O = glycerol + (9Z)-octadecenoate + H(+). The enzyme catalyses 2-(9Z,12Z-octadecadienoyl)-glycerol + H2O = (9Z,12Z)-octadecadienoate + glycerol + H(+). It catalyses the reaction 1-(5Z,8Z,11Z,14Z-eicosatetraenoyl)-glycerol + H2O = glycerol + (5Z,8Z,11Z,14Z)-eicosatetraenoate + H(+). It carries out the reaction 2-(5Z,8Z,11Z,14Z-eicosatetraenoyl)-glycerol + H2O = glycerol + (5Z,8Z,11Z,14Z)-eicosatetraenoate + H(+). The catalysed reaction is prostaglandin D2-1-glycerol ester + H2O = prostaglandin D2 + glycerol + H(+). The enzyme catalyses 2-glyceryl-15-deoxy-Delta(12,14)-prostaglandin J2 + H2O = 15-deoxy-Delta(12,14)-prostaglandin J2 + glycerol + H(+). It catalyses the reaction 1-(9Z,12Z-octadecadienoyl)-glycerol + H2O = (9Z,12Z)-octadecadienoate + glycerol + H(+). Inhibited by beta-lactone-based lipid inhibitors, such as beta-lactone palmostatin-B. Functionally, phosphatidylserine (PS) lipase that mediates the hydrolysis of phosphatidylserine to generate lysophosphatidylserine (LPS). LPS constitutes a class of signaling lipids that regulates immunological and neurological processes. Has no activity towards diacylglycerol, triacylglycerol or lysophosphatidylserine lipase. Also has monoacylglycerol lipase activity, with preference for 1-(9Z,12Z-octadecadienoyl)-glycerol (1-LG) and 2-glyceryl-15-deoxy-Delta(12,14)-prostaglandin J2 (15d-PGJ(2)-G). The polypeptide is Phosphatidylserine lipase ABHD16A (Homo sapiens (Human)).